The sequence spans 123 residues: Small ribosomal subunit protein uS12 (123 aa).

The segment at 9–28 is disordered; the sequence is RNGRKRATKKTTTPALKGAP. Over residues 18–27 the composition is skewed to low complexity; the sequence is KTTTPALKGA. The residue at position 89 (Asp89) is a 3-methylthioaspartic acid.

Belongs to the universal ribosomal protein uS12 family. As to quaternary structure, part of the 30S ribosomal subunit. Contacts proteins S8 and S17. May interact with IF1 in the 30S initiation complex.

With S4 and S5 plays an important role in translational accuracy. Functionally, interacts with and stabilizes bases of the 16S rRNA that are involved in tRNA selection in the A site and with the mRNA backbone. Located at the interface of the 30S and 50S subunits, it traverses the body of the 30S subunit contacting proteins on the other side and probably holding the rRNA structure together. The combined cluster of proteins S8, S12 and S17 appears to hold together the shoulder and platform of the 30S subunit. This chain is Small ribosomal subunit protein uS12, found in Desulfosudis oleivorans (strain DSM 6200 / JCM 39069 / Hxd3) (Desulfococcus oleovorans).